The following is a 147-amino-acid chain: Cytochrome c-type biogenesis protein CcmE (147 aa).

At 1 to 7 the chain is on the cytoplasmic side; that stretch reads MTVRQRR. Residues 8-28 traverse the membrane as a helical; Signal-anchor for type II membrane protein segment; it reads FAMVILVVIGVSIATGLGLKA. The Periplasmic portion of the chain corresponds to 29 to 147; the sequence is FQENILFFYN…KTKANTEDKL (119 aa). 2 residues coordinate heme: H123 and Y127.

It belongs to the CcmE/CycJ family.

Its subcellular location is the cell inner membrane. Its function is as follows. Heme chaperone required for the biogenesis of c-type cytochromes. Transiently binds heme delivered by CcmC and transfers the heme to apo-cytochromes in a process facilitated by CcmF and CcmH. The protein is Cytochrome c-type biogenesis protein CcmE of Nitrosococcus oceani (strain ATCC 19707 / BCRC 17464 / JCM 30415 / NCIMB 11848 / C-107).